The following is a 196-amino-acid chain: Orotate phosphoribosyltransferase (196 aa).

117-125 (EDVVTTGLS) contributes to the 5-phospho-alpha-D-ribose 1-diphosphate binding site. The orotate site is built by Thr-121 and Arg-149.

Belongs to the purine/pyrimidine phosphoribosyltransferase family. PyrE subfamily. Homodimer. Requires Mg(2+) as cofactor.

The enzyme catalyses orotidine 5'-phosphate + diphosphate = orotate + 5-phospho-alpha-D-ribose 1-diphosphate. The protein operates within pyrimidine metabolism; UMP biosynthesis via de novo pathway; UMP from orotate: step 1/2. Catalyzes the transfer of a ribosyl phosphate group from 5-phosphoribose 1-diphosphate to orotate, leading to the formation of orotidine monophosphate (OMP). This chain is Orotate phosphoribosyltransferase, found in Rhizorhabdus wittichii (strain DSM 6014 / CCUG 31198 / JCM 15750 / NBRC 105917 / EY 4224 / RW1) (Sphingomonas wittichii).